Consider the following 295-residue polypeptide: Pyridoxal 5'-phosphate synthase subunit PdxS (295 aa).

Position 25 (D25) interacts with D-ribose 5-phosphate. K82 functions as the Schiff-base intermediate with D-ribose 5-phosphate in the catalytic mechanism. Position 154 (G154) interacts with D-ribose 5-phosphate. D-glyceraldehyde 3-phosphate is bound at residue R166. Residues G215 and 236-237 (GS) each bind D-ribose 5-phosphate.

This sequence belongs to the PdxS/SNZ family. As to quaternary structure, in the presence of PdxT, forms a dodecamer of heterodimers.

It catalyses the reaction aldehydo-D-ribose 5-phosphate + D-glyceraldehyde 3-phosphate + L-glutamine = pyridoxal 5'-phosphate + L-glutamate + phosphate + 3 H2O + H(+). The protein operates within cofactor biosynthesis; pyridoxal 5'-phosphate biosynthesis. Functionally, catalyzes the formation of pyridoxal 5'-phosphate from ribose 5-phosphate (RBP), glyceraldehyde 3-phosphate (G3P) and ammonia. The ammonia is provided by the PdxT subunit. Can also use ribulose 5-phosphate and dihydroxyacetone phosphate as substrates, resulting from enzyme-catalyzed isomerization of RBP and G3P, respectively. This is Pyridoxal 5'-phosphate synthase subunit PdxS from Bacillus cereus (strain 03BB102).